The primary structure comprises 456 residues: Chromosomal replication initiator protein DnaA (456 aa).

A domain I, interacts with DnaA modulators region spans residues 1–83 (MTASLWQQCL…LRFDIGNRPH (83 aa)). Residues 83–119 (HPVAIARAPARGAAPVNNLQKSWESKADAKPEPNHKS) form a domain II region. The domain III, AAA+ region stretch occupies residues 120–336 (NTNVNYTFEN…GALNRVIANA (217 aa)). The ATP site is built by G164, G166, K167, and T168. Residues 337-456 (NFTGRAINID…YSNLIRTLSS (120 aa)) are domain IV, binds dsDNA.

This sequence belongs to the DnaA family. Oligomerizes as a right-handed, spiral filament on DNA at oriC.

The protein resides in the cytoplasm. Plays an essential role in the initiation and regulation of chromosomal replication. ATP-DnaA binds to the origin of replication (oriC) to initiate formation of the DNA replication initiation complex once per cell cycle. Binds the DnaA box (a 9 base pair repeat at the origin) and separates the double-stranded (ds)DNA. Forms a right-handed helical filament on oriC DNA; dsDNA binds to the exterior of the filament while single-stranded (ss)DNA is stabiized in the filament's interior. The ATP-DnaA-oriC complex binds and stabilizes one strand of the AT-rich DNA unwinding element (DUE), permitting loading of DNA polymerase. After initiation quickly degrades to an ADP-DnaA complex that is not apt for DNA replication. Binds acidic phospholipids. The sequence is that of Chromosomal replication initiator protein DnaA from Aeromonas salmonicida (strain A449).